Reading from the N-terminus, the 368-residue chain is Protein mab-21-like 3 (368 aa).

It belongs to the mab-21 family.

The protein is Protein mab-21-like 3 (mab21L3) of Xenopus laevis (African clawed frog).